The following is a 442-amino-acid chain: tRNA modification GTPase MnmE (442 aa).

(6S)-5-formyl-5,6,7,8-tetrahydrofolate is bound by residues arginine 23, glutamate 82, and lysine 121. A TrmE-type G domain is found at 217–363 (PFKIAIIGET…LVDLLTKYIN (147 aa)). Residue asparagine 227 coordinates K(+). Residues 227-232 (NVGKSS), 246-252 (SNIKGST), and 271-274 (DTAG) each bind GTP. Residue serine 231 coordinates Mg(2+). K(+) is bound by residues serine 246, isoleucine 248, and serine 251. Threonine 252 is a Mg(2+) binding site. A (6S)-5-formyl-5,6,7,8-tetrahydrofolate-binding site is contributed by lysine 442.

Belongs to the TRAFAC class TrmE-Era-EngA-EngB-Septin-like GTPase superfamily. TrmE GTPase family. In terms of assembly, homodimer. Heterotetramer of two MnmE and two MnmG subunits. The cofactor is K(+).

It is found in the cytoplasm. Exhibits a very high intrinsic GTPase hydrolysis rate. Involved in the addition of a carboxymethylaminomethyl (cmnm) group at the wobble position (U34) of certain tRNAs, forming tRNA-cmnm(5)s(2)U34. The sequence is that of tRNA modification GTPase MnmE from Mycoplasma genitalium (strain ATCC 33530 / DSM 19775 / NCTC 10195 / G37) (Mycoplasmoides genitalium).